Here is a 1422-residue protein sequence, read N- to C-terminus: DNA-directed RNA polymerase subunit beta (1422 aa).

The disordered stretch occupies residues 1392 to 1422; that stretch reads QAAREAAERDLGGGPLGAPRGAVASGEKSSA.

The protein belongs to the RNA polymerase beta chain family. In terms of assembly, the RNAP catalytic core consists of 2 alpha, 1 beta, 1 beta' and 1 omega subunit. When a sigma factor is associated with the core the holoenzyme is formed, which can initiate transcription.

It carries out the reaction RNA(n) + a ribonucleoside 5'-triphosphate = RNA(n+1) + diphosphate. Its function is as follows. DNA-dependent RNA polymerase catalyzes the transcription of DNA into RNA using the four ribonucleoside triphosphates as substrates. The sequence is that of DNA-directed RNA polymerase subunit beta from Anaeromyxobacter dehalogenans (strain 2CP-C).